The following is a 392-amino-acid chain: Na(+)/H(+) antiporter NhaA 2 (392 aa).

The next 11 helical transmembrane spans lie at 20–40 (FFAAESAGGLVLMAAALAALI), 61–81 (LSVSHWINDGLMAIFFMLVGL), 99–119 (ALPGFAALGGMLVPALIYVAF), 127–147 (IGGWAIPAATDIAFALGVLSL), 158–178 (IFLSALAILDDLGAVLIIALF), 181–201 (SDLSIPMLLAALGSIAMLVAL), 209–229 (LLPYLIVGALLWFFMLQSGIH), 265–285 (VAFAVVPIFGFANAGVSLSGI), 298–318 (VALGLLVGKQVGIFAMAALAI), 336–356 (GVAALCGIGFTMSLFIGALAF), and 365–385 (EVKVGVLIGSVLSAVLGVVVL).

Belongs to the NhaA Na(+)/H(+) (TC 2.A.33) antiporter family.

It localises to the cell inner membrane. The enzyme catalyses Na(+)(in) + 2 H(+)(out) = Na(+)(out) + 2 H(+)(in). Its function is as follows. Na(+)/H(+) antiporter that extrudes sodium in exchange for external protons. The protein is Na(+)/H(+) antiporter NhaA 2 of Pseudomonas syringae pv. syringae (strain B728a).